Here is a 316-residue protein sequence, read N- to C-terminus: Aspartate carbamoyltransferase catalytic subunit (316 aa).

Carbamoyl phosphate contacts are provided by R60 and T61. An L-aspartate-binding site is contributed by K88. Carbamoyl phosphate is bound by residues R110, H138, and Q141. The L-aspartate site is built by R171 and R225. Positions 266 and 267 each coordinate carbamoyl phosphate.

This sequence belongs to the aspartate/ornithine carbamoyltransferase superfamily. ATCase family. In terms of assembly, heterododecamer (2C3:3R2) of six catalytic PyrB chains organized as two trimers (C3), and six regulatory PyrI chains organized as three dimers (R2).

The enzyme catalyses carbamoyl phosphate + L-aspartate = N-carbamoyl-L-aspartate + phosphate + H(+). The protein operates within pyrimidine metabolism; UMP biosynthesis via de novo pathway; (S)-dihydroorotate from bicarbonate: step 2/3. In terms of biological role, catalyzes the condensation of carbamoyl phosphate and aspartate to form carbamoyl aspartate and inorganic phosphate, the committed step in the de novo pyrimidine nucleotide biosynthesis pathway. The sequence is that of Aspartate carbamoyltransferase catalytic subunit from Rhizorhabdus wittichii (strain DSM 6014 / CCUG 31198 / JCM 15750 / NBRC 105917 / EY 4224 / RW1) (Sphingomonas wittichii).